We begin with the raw amino-acid sequence, 264 residues long: Movement protein (264 aa).

The segment at 211 to 264 (RTKSSKRGPKNNNNLGKGRSGGRPKPKSVDEVEEEFDNLIEDEAETSVADSDSY) is disordered. Residues 241-255 (EVEEEFDNLIEDEAE) are compositionally biased toward acidic residues.

Belongs to the tobamovirus movement protein family. In terms of assembly, binds to host RBCS at the plasmodesmata; this interaction seems required for viral systemic movement. In resistant plants, interacts with host MBP2C at host microtubules; this interaction prevents virus cell to cell movement. In resistant plants, interacts with host resistance (R) protein (e.g. tomato ToMV resistance protein TM-2(2), AC Q71BG9) at the host plasma membrane; this interaction triggers host defense responses leading to programmed cell death.

It localises to the host cytoplasm. The protein localises to the host cytoskeleton. The protein resides in the host cell junction. Its subcellular location is the host plasmodesma. Its function is as follows. Transports viral genome to neighboring plant cells directly through plasmosdesmata, without any budding. The movement protein allows efficient cell to cell propagation, by bypassing the host cell wall barrier. Forms a ribonucleoprotein complex with viral RNA. Binds microtubules and modulates microtubule stability. Can bind double-stranded DNA. Triggers host hypersensitive defense reaction in incompatible plants harboring resistance (R) proteins. The chain is Movement protein (MP) from Antirrhinum majus (Garden snapdragon).